A 348-amino-acid chain; its full sequence is Dihydroorotase (348 aa).

2 residues coordinate Zn(2+): His-17 and His-19. Substrate contacts are provided by residues 19 to 21 (HLR) and Asn-45. Zn(2+) is bound by residues Lys-103, His-140, and His-178. N6-carboxylysine is present on Lys-103. His-140 is a binding site for substrate. A substrate-binding site is contributed by Leu-223. A Zn(2+)-binding site is contributed by Asp-251. The active site involves Asp-251. Substrate contacts are provided by His-255 and Ala-267.

The protein belongs to the metallo-dependent hydrolases superfamily. DHOase family. Class II DHOase subfamily. Homodimer. It depends on Zn(2+) as a cofactor.

It catalyses the reaction (S)-dihydroorotate + H2O = N-carbamoyl-L-aspartate + H(+). Its pathway is pyrimidine metabolism; UMP biosynthesis via de novo pathway; (S)-dihydroorotate from bicarbonate: step 3/3. Its function is as follows. Catalyzes the reversible cyclization of carbamoyl aspartate to dihydroorotate. The protein is Dihydroorotase of Shigella flexneri.